Reading from the N-terminus, the 199-residue chain is MRQGFPKARAGEVIGLFGGSFDPAHQGHAHITREALKRFGLDRVWWLVSPGNPLKPQGPAPLDTRMARAKAIMQHPRVIITDVETRLGTRYTAATLDQLSALYPGVHFVWLMGADNLAQFHKWQRWRDIASTTPLGVLARPGDRIPARMSPAAAVFGRARIPGRASQLLGRAAAPAWCFVNVPMVEQSSSAIRSKGGWV.

Belongs to the NadD family.

It carries out the reaction nicotinate beta-D-ribonucleotide + ATP + H(+) = deamido-NAD(+) + diphosphate. The protein operates within cofactor biosynthesis; NAD(+) biosynthesis; deamido-NAD(+) from nicotinate D-ribonucleotide: step 1/1. Its function is as follows. Catalyzes the reversible adenylation of nicotinate mononucleotide (NaMN) to nicotinic acid adenine dinucleotide (NaAD). The polypeptide is Probable nicotinate-nucleotide adenylyltransferase (Roseobacter denitrificans (strain ATCC 33942 / OCh 114) (Erythrobacter sp. (strain OCh 114))).